We begin with the raw amino-acid sequence, 515 residues long: 4-hydroxybenzoate brominase (decarboxylating) (515 aa).

Positions 13, 32, 40, 41, 51, 102, and 364 each coordinate FAD.

Belongs to the FMO family. FAD serves as cofactor.

The enzyme catalyses 2 bromide + 4-hydroxybenzoate + 2 NADPH + 2 O2 + 5 H(+) = 2,4-dibromophenol + CO2 + 2 NADP(+) + 4 H2O. It catalyses the reaction bromide + 4-hydroxybenzoate + NADPH + O2 + 2 H(+) = 3-bromo-4-hydroxybenzoate + NADP(+) + 2 H2O. The catalysed reaction is 3-bromo-4-hydroxybenzoate + bromide + NADPH + O2 + 3 H(+) = 2,4-dibromophenol + CO2 + NADP(+) + 2 H2O. It carries out the reaction 3,4-dihydroxybenzoate + 2 bromide + 2 NADPH + 2 O2 + 5 H(+) = 3,5-dibromobenzene-1,2-diol + CO2 + 2 NADP(+) + 4 H2O. The enzyme catalyses 3,4-dihydroxybenzoate + bromide + NADPH + O2 + 2 H(+) = 3-bromo-4,5-dihydroxybenzoate + NADP(+) + 2 H2O. It catalyses the reaction 3-bromo-4,5-dihydroxybenzoate + bromide + NADPH + O2 + 3 H(+) = 3,5-dibromobenzene-1,2-diol + CO2 + NADP(+) + 2 H2O. Activity is abolished in the absence of either bromide or NADPH, while a partial reduction in activity is observed upon omission of FAD. Activity does not require the addition of a flavin reductase to regenerate FADH(2) in situ. Functionally, brominase involved in the biosynthesis of polybrominated aromatic organic compounds. Catalyzes the bromination of 4-hydroxybenzoate (4-HBA) to 3-bromo-4-hydroxybenzoate, followed by bromination and decarboxylation of 3-bromo-4-hydroxybenzoate to 2,4-dibromophenol. Can also use 3,4-dihydroxybenzoate, with lower efficiency, forming 3-bromo-4,5-dihydroxybenzoate and 3,5-dibromobenzene-1,2-diol. Can utilize iodide in vivo leading to the formation of iodophenols, but cannot use chloride. The polypeptide is 4-hydroxybenzoate brominase (decarboxylating) (Pseudoalteromonas luteoviolacea (strain 2ta16)).